A 123-amino-acid polypeptide reads, in one-letter code: Potassium voltage-gated channel subfamily E member 2 (123 aa).

2 N-linked (GlcNAc...) asparagine glycosylation sites follow: asparagine 6 and asparagine 29. A helical membrane pass occupies residues 49-69; the sequence is VILYLMVMIGMFSFIIVAILV. At 70-123 the chain is on the cytoplasmic side; the sequence is STVKSKRREHSNDPYHQYIVEDWQEKYKSQILNLEESKATIHENIGAAGFKMSP.

Belongs to the potassium channel KCNE family. In terms of assembly, interacts with KCNB1. Associates with KCNH2/ERG1. May associate with KCNQ2 and KCNQ3. Associates with HCN1 and probably HCN2. Heteromultimer with KCNC2. Interacts with KCNC2. Interacts with KCNQ1; forms a heterooligomer complex that targets to the membrane raft and leading to currents with an apparently instantaneous activation, a rapid deactivation process and a linear current-voltage relationship and decreases the amplitude of the outward current. In terms of tissue distribution, highly expressed in brain, heart, skeletal muscle, pancreas, placenta, kidney, colon and thymus. A small but significant expression is found in liver, ovary, testis, prostate, small intestine and leukocytes. Very low expression, nearly undetectable, in lung and spleen.

The protein localises to the cell membrane. The protein resides in the apical cell membrane. In terms of biological role, ancillary protein that functions as a regulatory subunit of the voltage-gated potassium (Kv) channel complex composed of pore-forming and potassium-conducting alpha subunits and of regulatory beta subunits. KCNE2 beta subunit modulates the gating kinetics and enhances stability of the channel complex. Alters the gating of the delayed rectifier Kv channel containing KCNB1 alpha subunit. Associates with KCNH2/HERG alpha subunit Kv channel to form the rapidly activating component of the delayed rectifying potassium current (IKr) in heart. May associate with KCNQ2 and/or KCNQ3 alpha subunits to modulate the native M-type current. May associate with HCN1 and HCN2 channel subunits to increase potassium current. Forms a heterooligomer complex with KCNQ1/KVLQT1 alpha subunits which leads to currents with an apparently instantaneous activation, a rapid deactivation process and a linear current-voltage relationship and decreases the amplitude of the outward current. KCNQ1-KCNE2 channel associates with Na(+)-coupled myo-inositol symporter in the apical membrane of choroid plexus epithelium and regulates the myo-inositol gradient between blood and cerebrospinal fluid with an impact on neuron excitability. The sequence is that of Potassium voltage-gated channel subfamily E member 2 from Homo sapiens (Human).